The chain runs to 636 residues: Phosphomethylpyrimidine synthase (636 aa).

The segment at 48–70 (DDTPTDFGGEKNPPVRVYDTSGP) is disordered. Residues asparagine 231, methionine 260, tyrosine 289, histidine 325, 345-347 (SRG), 386-389 (DGLR), and glutamate 425 each bind substrate. A Zn(2+)-binding site is contributed by histidine 429. Tyrosine 452 contributes to the substrate binding site. Histidine 493 is a Zn(2+) binding site. [4Fe-4S] cluster is bound by residues cysteine 573, cysteine 576, and cysteine 581.

This sequence belongs to the ThiC family. Homodimer. [4Fe-4S] cluster is required as a cofactor.

It carries out the reaction 5-amino-1-(5-phospho-beta-D-ribosyl)imidazole + S-adenosyl-L-methionine = 4-amino-2-methyl-5-(phosphooxymethyl)pyrimidine + CO + 5'-deoxyadenosine + formate + L-methionine + 3 H(+). It participates in cofactor biosynthesis; thiamine diphosphate biosynthesis. Functionally, catalyzes the synthesis of the hydroxymethylpyrimidine phosphate (HMP-P) moiety of thiamine from aminoimidazole ribotide (AIR) in a radical S-adenosyl-L-methionine (SAM)-dependent reaction. The chain is Phosphomethylpyrimidine synthase from Cellvibrio japonicus (strain Ueda107) (Pseudomonas fluorescens subsp. cellulosa).